Consider the following 441-residue polypeptide: Protein MONOCULM 1 (441 aa).

Positions 1–33 (MLRSLHSSSSSDTDNNSGGCKNNGGGGGEAAAA) are disordered. Residues 7 to 20 (SSSSSDTDNNSGGC) show a composition bias toward low complexity. Positions 21–33 (KNNGGGGGEAAAA) are enriched in gly residues. The GRAS domain occupies 41-437 (RAVAAAAPST…RPLLSVSAWQ (397 aa)). Positions 48-126 (PSTRDLLLAC…GAARPASSGA (79 aa)) are leucine repeat I (LRI). A VHIID region spans residues 127-195 (YLAFNQIAPF…LGPPEVRVTG (69 aa)). A VHIID motif is present at residues 158–162 (VHILD). Positions 205-256 (RTGNRLRAFARSIHLPFHFTPLLLSCATTAPHHVAGTSTGAAAAASTAAAAT) are leucine repeat II (LRII). The tract at residues 266–361 (LAVNCVMFLH…QEVLGREIEA (96 aa)) is PFYRE. Residues 364 to 437 (GPSGGRWWRG…RPLLSVSAWQ (74 aa)) form an SAW region.

Belongs to the GRAS family. In terms of tissue distribution, expressed in a small number of epidermal or subepidermal cells at the leaf axils, in axillary meristems and the entire tiller buds. Undetected in the shoot apical meristem.

The protein resides in the nucleus. In terms of biological role, putative transcription regulator that controls rice tillering by initiating axillary buds and promoting their outgrowth. Rice tiller is a specialized grain-bearing branch that is formed on the unelongated basal internode and grows independently of the mother stem (culm) by means of its own adventitious roots. In Oryza sativa subsp. japonica (Rice), this protein is Protein MONOCULM 1.